We begin with the raw amino-acid sequence, 149 residues long: Alpha-amylase/trypsin inhibitor CMb (149 aa).

The signal sequence occupies residues 1 to 24 (MASKSSCDLLLAAVLVSIFAAVAA). The N-linked (GlcNAc...) asparagine glycan is linked to Asn124.

It belongs to the protease inhibitor I6 (cereal trypsin/alpha-amylase inhibitor) family. In terms of assembly, heterotetramer of one CMa, one CMb and two CMd chains. Post-translationally, five disulfide bonds, which are essential for the inhibitor activity, are probably present. In terms of processing, exists both in a glycosylated and in an unglycosylated form. The glycosylated form is a potent allergen. In terms of tissue distribution, endosperm.

The protein localises to the secreted. Functionally, part of a complex with inhibitory activity, but CMb is inactive as a separate subunit. The chain is Alpha-amylase/trypsin inhibitor CMb (IAT2) from Hordeum vulgare (Barley).